A 452-amino-acid polypeptide reads, in one-letter code: MGRKKKKQLKPWCWYCNRDFDDEKILIQHQKAKHFKCHICHKKLYTGPGLAIHCMQVHKETIDAVPNAIPGRTDIELEIYGMEGIPEKDMEERRRILEQKTQVDGQKKKTNQDDSDYDDDDDTAPSTSFQQMQTQQAFMPTMGQPGIPGLPGAPGMPPGITSLMPAVPPLISGIPHVMAGMHPHGMMSMGGMMHPHRPGIPPMMAGLPPGVPPPGLRPGIPPVTQAQPALSQAVVSRLPVPSTSAPALQSVPKPLFPSAGQAQAHISGPVGTDFKPLNNIPATTAEHPKPTFPAYTQSTMSTTSTTNSTASKPSTSITSKPATLTTTSATSKLVHPDEDISLEEKRAQLPKYQRNLPRPGQAPISNMGSTAVGPLGAMMAPRPGLPPQQHGMRHPLPPHGQYGAPLQGMAGYHPGTMPPFGQGPPMVPPFQGGPPRPLMGIRPPVMSQGGRY.

The interval 1–92 (MGRKKKKQLK…EGIPEKDMEE (92 aa)) is microtubule-binding region. 2 consecutive C2H2-type zinc fingers follow at residues 11 to 34 (PWCWYCNRDFDDEKILIQHQKAKH) and 35 to 58 (FKCHICHKKLYTGPGLAIHCMQVH). Disordered regions lie at residues 99–131 (QKTQVDGQKKKTNQDDSDYDDDDDTAPSTSFQQ) and 298–330 (STMSTTSTTNSTASKPSTSITSKPATLTTTSAT). The segment covering 113 to 123 (DDSDYDDDDDT) has biased composition (acidic residues). The tract at residues 329-361 (ATSKLVHPDEDISLEEKRAQLPKYQRNLPRPGQ) is GLEBS.

In terms of assembly, interacts (via GLEBS region) with bub3.

The protein resides in the nucleus. It is found in the chromosome. It localises to the centromere. Its subcellular location is the kinetochore. The protein localises to the cytoplasm. The protein resides in the cytoskeleton. It is found in the spindle. Kinetochore- and microtubule-binding protein that plays a key role in spindle assembly. Znf207/BuGZ is mainly composed of disordered low-complexity regions and undergoes phase transition or coacervation to form temperature-dependent liquid droplets. Coacervation promotes microtubule bundling and concentrates tubulin, promoting microtubule polymerization and assembly of spindle and spindle matrix by concentrating its building blocks. The protein is BUB3-interacting and GLEBS motif-containing protein ZNF207 of Xenopus laevis (African clawed frog).